The primary structure comprises 205 residues: Small ribosomal subunit protein uS4 (205 aa).

Positions 1 to 16 (MSKRESSKYKIDRRMG) are enriched in basic and acidic residues. The segment at 1–46 (MSKRESSKYKIDRRMGENIWGRPKSPVNRREYGPGQHGQRRKGKLS) is disordered. The S4 RNA-binding domain maps to 94 to 157 (SRLDAIVYRA…KQLVIVLEAV (64 aa)).

It belongs to the universal ribosomal protein uS4 family. As to quaternary structure, part of the 30S ribosomal subunit. Contacts protein S5. The interaction surface between S4 and S5 is involved in control of translational fidelity.

Functionally, one of the primary rRNA binding proteins, it binds directly to 16S rRNA where it nucleates assembly of the body of the 30S subunit. Its function is as follows. With S5 and S12 plays an important role in translational accuracy. The protein is Small ribosomal subunit protein uS4 of Rhizobium leguminosarum bv. trifolii (strain WSM2304).